The primary structure comprises 811 residues: MAHLLFLPILQLLLLYCTKSAQAQLNISIGSSLTPQGVNNSWISPSADFAFGFRAVDGNSSSYLLAVWFNKIADKTVVWYARTSSNGKDDTIPVQVQSGSVLKLADGALSLRDPSGNEVWNPQVTDVGYARMLDTGNFRLLGTDGATKWESFGDPSDTILPTQVLSLGTALHSRLLATDYSNGRFQLKVQRDGNLVMYPDAVPSGYLYDPYWASNTVDNGSQLVFNETGRIYFTIINGSQVNITSAGVDSMGDFFHRATLDTDGVFRQYVYPKNIHARPLWPEQWTAVDVLPENICQSIQTMVGSGACGFNSYCTIDGTKNTTSCLCPQNYKFIDDKRKYKGCRPDFEPQNCDLDETTAMLQYDMAPIDRVDWPLSDYEQYNPIDQTECRRLCVIDCFCAVAVFDKASSTCWKKRFPLSNGKMDVNVPRTVLIKVPRSTNSPSVFSSGSSKWKEDKKYWILGSSLLFGSSVLVNFLLISVMLFGTYCSITSRKKIQLSQPSNKSGLPPKIFTYSELEKATGGFQEVLGTGASGVVYKGQLQDEFGINIAVKKIEKLQQEAQKEFLVEVQTIGQTFHRNLVRLLGFCNEGTERLLVYEFMSNGSLNTFLFSDTHPHWSLRVQVALGVARGLLYLHEECNKQIIHCDMKPQNILLDDNFAAKISDFGLAKLLPVNQTQTNTGIRGTRGYVAPEWFKNIGITSKVDVYSFGVILLELVCCRKNVELEVLDEEQTILTYWANDCYKCGRIDLLVAGDDEAIFNIKKVERFVAVALWCLQEEPSMRPTMLKVTQMLDGAVQIPTPPDPSSYISSLA.

The N-terminal stretch at 1 to 23 is a signal peptide; the sequence is MAHLLFLPILQLLLLYCTKSAQA. One can recognise a Bulb-type lectin domain in the interval 24–153; the sequence is QLNISIGSSL…DGATKWESFG (130 aa). Over 24-464 the chain is Extracellular; the sequence is QLNISIGSSL…DKKYWILGSS (441 aa). N-linked (GlcNAc...) asparagine glycosylation is found at asparagine 26, asparagine 39, asparagine 59, asparagine 219, asparagine 226, asparagine 237, and asparagine 242. The EGF-like; atypical domain maps to 292–344; the sequence is PENICQSIQTMVGSGACGFNSYCTIDGTKNTTSCLCPQNYKFIDDKRKYKGCR. Disulfide bonds link cysteine 296–cysteine 314, cysteine 308–cysteine 325, cysteine 327–cysteine 343, cysteine 389–cysteine 411, and cysteine 393–cysteine 399. Asparagine 321 is a glycosylation site (N-linked (GlcNAc...) asparagine). The PAN domain occupies 352 to 430; sequence CDLDETTAML…GKMDVNVPRT (79 aa). Residues 465–485 form a helical membrane-spanning segment; the sequence is LLFGSSVLVNFLLISVMLFGT. Residues 486 to 811 lie on the Cytoplasmic side of the membrane; sequence YCSITSRKKI…DPSSYISSLA (326 aa). The 275-residue stretch at 521 to 795 folds into the Protein kinase domain; it reads GGFQEVLGTG…KVTQMLDGAV (275 aa). Residues 527–535 and lysine 551 each bind ATP; that span reads LGTGASGVV. Catalysis depends on aspartate 645, which acts as the Proton acceptor.

This sequence belongs to the protein kinase superfamily. Ser/Thr protein kinase family.

Its subcellular location is the membrane. It catalyses the reaction L-seryl-[protein] + ATP = O-phospho-L-seryl-[protein] + ADP + H(+). The enzyme catalyses L-threonyl-[protein] + ATP = O-phospho-L-threonyl-[protein] + ADP + H(+). In terms of biological role, involved in resistance against the herbivorous insect brown planthopper (N.lugens, BPH). Member of the BPH3 (BPH resistance locus 3) cluster which contains LECRK1, LECRK2 and LECRK3. The protein is G-type lectin S-receptor-like serine/threonine-protein kinase LECRK3 of Oryza sativa subsp. indica (Rice).